A 227-amino-acid polypeptide reads, in one-letter code: Thymidine kinase (227 aa).

Residues 15–22 (GSMFSGKT) and 87–90 (DEAQ) each bind ATP. The Proton acceptor role is filled by Glu88. Cys144, Cys147, Cys176, and Cys179 together coordinate Zn(2+). The disordered stretch occupies residues 198-227 (RAVATDDADASTNEADPEAADAASADGTAA). Residues 217–227 (ADAASADGTAA) show a composition bias toward low complexity.

This sequence belongs to the thymidine kinase family. In terms of assembly, homotetramer.

It localises to the cytoplasm. It carries out the reaction thymidine + ATP = dTMP + ADP + H(+). This chain is Thymidine kinase, found in Salinibacter ruber (strain DSM 13855 / M31).